We begin with the raw amino-acid sequence, 167 residues long: Probable chemoreceptor glutamine deamidase CheD (167 aa).

The protein belongs to the CheD family.

It carries out the reaction L-glutaminyl-[protein] + H2O = L-glutamyl-[protein] + NH4(+). Its function is as follows. Probably deamidates glutamine residues to glutamate on methyl-accepting chemotaxis receptors (MCPs), playing an important role in chemotaxis. The chain is Probable chemoreceptor glutamine deamidase CheD from Moorella thermoacetica (strain ATCC 39073 / JCM 9320).